The following is a 463-amino-acid chain: tRNA-2-methylthio-N(6)-dimethylallyladenosine synthase (463 aa).

Residues 18-136 (RKLYIETYGC…LPNLVGAAEQ (119 aa)) enclose the MTTase N-terminal domain. [4Fe-4S] cluster is bound by residues C27, C63, C100, C174, C178, and C181. The region spanning 160 to 392 (GGVHINGFVS…IALQNRLSEE (233 aa)) is the Radical SAM core domain. Residues 395 to 458 (KRDIGKTFEV…SATLFGEVVE (64 aa)) form the TRAM domain.

The protein belongs to the methylthiotransferase family. MiaB subfamily. As to quaternary structure, monomer. Requires [4Fe-4S] cluster as cofactor.

It localises to the cytoplasm. The catalysed reaction is N(6)-dimethylallyladenosine(37) in tRNA + (sulfur carrier)-SH + AH2 + 2 S-adenosyl-L-methionine = 2-methylsulfanyl-N(6)-dimethylallyladenosine(37) in tRNA + (sulfur carrier)-H + 5'-deoxyadenosine + L-methionine + A + S-adenosyl-L-homocysteine + 2 H(+). In terms of biological role, catalyzes the methylthiolation of N6-(dimethylallyl)adenosine (i(6)A), leading to the formation of 2-methylthio-N6-(dimethylallyl)adenosine (ms(2)i(6)A) at position 37 in tRNAs that read codons beginning with uridine. The sequence is that of tRNA-2-methylthio-N(6)-dimethylallyladenosine synthase from Porphyromonas gingivalis (strain ATCC BAA-308 / W83).